A 56-amino-acid polypeptide reads, in one-letter code: Large ribosomal subunit protein bL32c (56 aa).

Positions 1–20 are enriched in basic residues; sequence MAAPKKRTSKSRKNMRKSTW. Residues 1-28 form a disordered region; that stretch reads MAAPKKRTSKSRKNMRKSTWKRQAATQA.

It belongs to the bacterial ribosomal protein bL32 family.

It is found in the plastid. The protein localises to the chloroplast. This is Large ribosomal subunit protein bL32c (rpl32) from Mesostigma viride (Green alga).